A 347-amino-acid polypeptide reads, in one-letter code: Quinolinate synthase (347 aa).

Iminosuccinate contacts are provided by H47 and S68. [4Fe-4S] cluster is bound at residue C113. Iminosuccinate is bound by residues 139 to 141 and S156; that span reads YAN. A [4Fe-4S] cluster-binding site is contributed by C200. Residues 226–228 and T243 each bind iminosuccinate; that span reads HPE. C297 is a binding site for [4Fe-4S] cluster.

It belongs to the quinolinate synthase family. Type 1 subfamily. Requires [4Fe-4S] cluster as cofactor.

It localises to the cytoplasm. The enzyme catalyses iminosuccinate + dihydroxyacetone phosphate = quinolinate + phosphate + 2 H2O + H(+). It functions in the pathway cofactor biosynthesis; NAD(+) biosynthesis; quinolinate from iminoaspartate: step 1/1. Functionally, catalyzes the condensation of iminoaspartate with dihydroxyacetone phosphate to form quinolinate. The chain is Quinolinate synthase from Enterobacter sp. (strain 638).